We begin with the raw amino-acid sequence, 445 residues long: Glutamate-1-semialdehyde 2,1-aminomutase (445 aa).

An N6-(pyridoxal phosphate)lysine modification is found at lysine 281.

Belongs to the class-III pyridoxal-phosphate-dependent aminotransferase family. HemL subfamily. As to quaternary structure, homodimer. Requires pyridoxal 5'-phosphate as cofactor.

It localises to the cytoplasm. It catalyses the reaction (S)-4-amino-5-oxopentanoate = 5-aminolevulinate. Its pathway is porphyrin-containing compound metabolism; protoporphyrin-IX biosynthesis; 5-aminolevulinate from L-glutamyl-tRNA(Glu): step 2/2. This is Glutamate-1-semialdehyde 2,1-aminomutase from Nocardioides sp. (strain ATCC BAA-499 / JS614).